The chain runs to 536 residues: Chorismate synthase (536 aa).

Residue His17 is part of the active site. The disordered stretch occupies residues 37 to 59 (EDVQPQLNRRRPGQGPLSTQRRE). The active site involves His104. A disordered region spans residues 344–377 (ERDGCSAATLSRERASDGRTTSRHEEEVERGRER). Residues 354–377 (SRERASDGRTTSRHEEEVERGRER) show a composition bias toward basic and acidic residues. Asp489 is an active-site residue.

This sequence belongs to the chorismate synthase family. It depends on FMNH2 as a cofactor.

The enzyme catalyses 5-O-(1-carboxyvinyl)-3-phosphoshikimate = chorismate + phosphate. It catalyses the reaction FMNH2 + NADP(+) = FMN + NADPH + 2 H(+). Its pathway is metabolic intermediate biosynthesis; chorismate biosynthesis; chorismate from D-erythrose 4-phosphate and phosphoenolpyruvate: step 7/7. Bifunctional chorismate synthase and flavin reductase. Catalyzes the conversion of 5-enolpyruvylshikimate 3-phosphate (EPSP) to form chorismate. Acts also as a flavin reductase (FR) able to generate reduced flavin mononucleotide in the presence of NADPH. The sequence is that of Chorismate synthase (AROC) from Toxoplasma gondii.